The sequence spans 244 residues: Haloacid dehalogenase-like hydrolase domain-containing protein 3 (244 aa).

It belongs to the HAD-like hydrolase superfamily.

The polypeptide is Haloacid dehalogenase-like hydrolase domain-containing protein 3 (hdhd3) (Xenopus laevis (African clawed frog)).